A 651-amino-acid chain; its full sequence is Probable potassium transport system protein Kup (651 aa).

The next 12 membrane-spanning stretches (helical) occupy residues 41–61, 82–102, 130–150, 163–183, 194–214, 235–255, 276–296, 309–329, 366–386, 395–415, 426–446, and 450–470; these read LVLG…IYAF, VVSL…VLFV, LILG…VITP, IVAP…LVTL, VAIV…ASGL, FLTV…LAMT, WLWI…AFIL, MIPS…TVIA, IYIP…VLGF, AYGI…YIVM, ALPI…ANII, and EGGW…WTWV.

Belongs to the HAK/KUP transporter (TC 2.A.72) family.

It localises to the cell inner membrane. The enzyme catalyses K(+)(in) + H(+)(in) = K(+)(out) + H(+)(out). In terms of biological role, transport of potassium into the cell. Likely operates as a K(+):H(+) symporter. The protein is Probable potassium transport system protein Kup of Brucella melitensis biotype 2 (strain ATCC 23457).